Here is a 200-residue protein sequence, read N- to C-terminus: MSEALTELASYLGEARGNLIAASQLKYGELTLTATGENLIPLLTFLRDDAKCGFVNLIDICGVDWPQRELRFDVVYHLLSPKKNLRIRVKVATDEDTPVPSACGLYPGADWFERETWDMYGVLFTGHPDLRRILTDYGFEGHPLRKDFPTTGFVEVRYDDAAKRVVYEPVELKQEFRNFDFMSPWEGTEYVLPGDEKAKQ.

This sequence belongs to the complex I 30 kDa subunit family. In terms of assembly, NDH-1 is composed of 14 different subunits. Subunits NuoB, C, D, E, F, and G constitute the peripheral sector of the complex.

It is found in the cell inner membrane. The enzyme catalyses a quinone + NADH + 5 H(+)(in) = a quinol + NAD(+) + 4 H(+)(out). Its function is as follows. NDH-1 shuttles electrons from NADH, via FMN and iron-sulfur (Fe-S) centers, to quinones in the respiratory chain. The immediate electron acceptor for the enzyme in this species is believed to be ubiquinone. Couples the redox reaction to proton translocation (for every two electrons transferred, four hydrogen ions are translocated across the cytoplasmic membrane), and thus conserves the redox energy in a proton gradient. This is NADH-quinone oxidoreductase subunit C 1 from Rhizobium etli (strain CIAT 652).